Here is a 239-residue protein sequence, read N- to C-terminus: MGKITRRTREAKKKQRQPIVKVCLSYPIIPQVEEGEVIDIVHERSRGAPVAIISFKEDDCMVPASEGMYTGQKILIGDDAPIDIGNITKIKNVPEGMAVNSVESVYGDGGTFAMVNGSYSLVVNHRKETNETVIKIPSGKKLTVSSECRCIVGVVAGGGIHDKPLLKASVAHYKAKARGHVFPRVRGVAMNPVEHIHGGGNHQHVGKPTTVSKKDISQEQKIGLVGARRTGYRVGSRKL.

Belongs to the universal ribosomal protein uL2 family.

Its subcellular location is the cytoplasm. The sequence is that of Large ribosomal subunit protein uL2 (RPL8) from Encephalitozoon cuniculi (strain GB-M1) (Microsporidian parasite).